The following is a 155-amino-acid chain: Large ribosomal subunit protein uL22c (155 aa).

It belongs to the universal ribosomal protein uL22 family. As to quaternary structure, part of the 50S ribosomal subunit.

It is found in the plastid. The protein resides in the chloroplast. Its function is as follows. This protein binds specifically to 23S rRNA. In terms of biological role, the globular domain of the protein is located near the polypeptide exit tunnel on the outside of the subunit, while an extended beta-hairpin is found that lines the wall of the exit tunnel in the center of the 70S ribosome. In Solanum bulbocastanum (Wild potato), this protein is Large ribosomal subunit protein uL22c (rpl22).